The sequence spans 622 residues: Chaperone protein HscA homolog (622 aa).

The protein belongs to the heat shock protein 70 family.

Its function is as follows. Chaperone involved in the maturation of iron-sulfur cluster-containing proteins. Has a low intrinsic ATPase activity which is markedly stimulated by HscB. In Burkholderia orbicola (strain MC0-3), this protein is Chaperone protein HscA homolog.